Reading from the N-terminus, the 167-residue chain is uncharacterized protein (167 aa).

The disordered stretch occupies residues 115–167; that stretch reads SYRSQPQLGFKSTPPAHSSVFHHSVKAPKEDQAQEAASRPLTSQDGWNPNIKK.

This is an uncharacterized protein from Homo sapiens (Human).